The sequence spans 53 residues: Rubredoxin (53 aa).

The 53-residue stretch at 1-53 folds into the Rubredoxin-like domain; that stretch reads MQKYVCDICGYVYDPAVGDPDNGVAPGTAFADLPEDWVCPECGVSKDEFSPEA. Fe cation contacts are provided by Cys-6, Cys-9, Cys-39, and Cys-42.

It belongs to the rubredoxin family. Fe(3+) serves as cofactor.

Rubredoxin is a small nonheme, iron protein lacking acid-labile sulfide. Its single Fe, chelated to 4 Cys, functions as an electron acceptor and may also stabilize the conformation of the molecule. The protein is Rubredoxin of Butyribacterium methylotrophicum.